The sequence spans 1013 residues: Dichlorochromopyrrolate synthase (1013 aa).

This sequence belongs to the RebD family. Homodimer. The cofactor is heme.

It carries out the reaction 2 3-(7-chloroindol-3-yl)-2-iminopropanoate + H2O2 = dichlorochromopyrrolate + NH4(+) + 2 H2O + H(+). The enzyme catalyses 2 2-iminio-3-(indol-3-yl)propanoate + H2O2 = chromopyrrolate + NH4(+) + 2 H2O + H(+). The catalysed reaction is 2 H2O2 = O2 + 2 H2O. Functionally, involved in the biosynthesis of the indolocarbazole antitumor agent rebeccamycin. Catalyzes the hydrogen peroxide-dependent dimerization of two L-tryptophan-derived molecules (imine form of indole 3-pyruvate (IPA)), to form dichlorochromopyrrolic acid (CPA), the precursor for the six-ring bisindolopyrrolocarbazole scaffold of the rebeccamycin. The hydrogen peroxide is provided together with iminoindolpropanoate by RebO. Due to the instability of indole 3-pyruvate (IPA), which is hydrolyzed in solution and exits in equilibrium with the predominant ketone form of IPA, the concerted functioning of the RebO/RebD system appears to prevent the buildup of significant amounts of IPA and its imine in solution, effectively shepherding the imine further down the biosynthetic chain. This Lentzea aerocolonigenes (Lechevalieria aerocolonigenes) protein is Dichlorochromopyrrolate synthase (rebD).